We begin with the raw amino-acid sequence, 478 residues long: Vacuolar protein sorting-associated protein 26 (478 aa).

The tract at residues 298–478 (PRYHGAQQHQ…KTGATPLATD (181 aa)) is disordered. 2 stretches are compositionally biased toward low complexity: residues 303–323 (AQQHQQQQHQHVPLHAPPHLV) and 347–356 (GAPTAPGTAG). The segment covering 367 to 379 (ESPNQEFSQQQMD) has biased composition (polar residues). Composition is skewed to low complexity over residues 386–406 (TPSTASVAVAVPTAASSVSEP) and 416–431 (AAAATTSASPVAMLSS).

Belongs to the VPS26 family. As to quaternary structure, component of the retromer complex, composed of Vps26 and Vps35.

The protein localises to the cytoplasm. Its subcellular location is the membrane. Functionally, component of the retromer complex which acts in conjunction with wingless (wg) and clathrin-mediated endocytosis to sustain a wntless (wls) traffic loop. This loop encompasses the Golgi, the cell surface, an endocytic compartment and a retrograde route leading back to the Golgi, thereby enabling wls to direct wg secretion. The hh and dpp signaling pathways do not require the retromer complex suggesting that it does not play a general role in exocytosis. In Drosophila melanogaster (Fruit fly), this protein is Vacuolar protein sorting-associated protein 26 (Vps26).